Consider the following 376-residue polypeptide: UPF0754 membrane protein SSP0953 (376 aa).

Helical transmembrane passes span 4–24 (FLVIIFMMVIGALIGGVTNVI) and 356–376 (FLGFLLGGIIGLFQGVIAIFV).

The protein belongs to the UPF0754 family.

It is found in the cell membrane. The polypeptide is UPF0754 membrane protein SSP0953 (Staphylococcus saprophyticus subsp. saprophyticus (strain ATCC 15305 / DSM 20229 / NCIMB 8711 / NCTC 7292 / S-41)).